The primary structure comprises 271 residues: GATA transcription factor 19 (271 aa).

Residues 1-23 (MAAEPPADGRDPPADDGAAGDGA) form a disordered region. The region spanning 33–68 (LSAASEQLTLVYQGEVYVFDPVPPQKVQAVLLVLGG) is the Tify domain. The 43-residue stretch at 95-137 (RVASLMRFREKRKERCFDKKIRYSVRKEVAQKMKRRKGQFAGR) folds into the CCT domain. The GATA-type zinc-finger motif lies at 166–193 (CQNCGISSRLTPAMRRGPAGPRSLCNAC). The segment at 238-271 (NQTTMKTDTEMVPEQEQKADVLPPTKEEDSMATS) is disordered. A compositionally biased stretch (basic and acidic residues) spans 252-271 (QEQKADVLPPTKEEDSMATS).

Belongs to the type IV zinc-finger family. Class C subfamily.

Its subcellular location is the nucleus. Functionally, transcriptional activator that specifically binds 5'-GATA-3' or 5'-GAT-3' motifs within gene promoters. In Oryza sativa subsp. japonica (Rice), this protein is GATA transcription factor 19.